Reading from the N-terminus, the 367-residue chain is Spore wall protein 9 (367 aa).

An N-terminal signal peptide occupies residues 1–29 (MSTQPTKTSSTKLRIFKWLFIISTLVAIA).

In terms of assembly, interacts with SWP7.

It localises to the cytoplasm. It is found in the spore wall. Its subcellular location is the spore polar tube. In terms of biological role, involved in adherence of spores to the host cell surface and in infection efficiency. The polypeptide is Spore wall protein 9 (Nosema bombycis (strain CQ1 / CVCC 102059) (Microsporidian parasite)).